Here is a 93-residue protein sequence, read N- to C-terminus: UPF0358 protein BBR47_22520 (93 aa).

It belongs to the UPF0358 family.

The protein is UPF0358 protein BBR47_22520 of Brevibacillus brevis (strain 47 / JCM 6285 / NBRC 100599).